The sequence spans 274 residues: Cytochrome b-c1 complex subunit Rieske, mitochondrial (274 aa).

Over 79–103 (SHTDIKVPDFSDYRRAEVLDSTKSS) the chain is Mitochondrial matrix. Residues 104 to 140 (KESSEARKGFSYLVTATTTVGVAYAAKNAVSQFVSSM) form a helical membrane-spanning segment. The Mitochondrial intermembrane portion of the chain corresponds to 141-274 (SASADVLAMS…FTSGDVVVVG (134 aa)). A Rieske domain is found at 187–272 (EAAVEVSQLR…YEFTSGDVVV (86 aa)). 5 residues coordinate [2Fe-2S] cluster: Cys217, His219, Cys236, His239, and Ser241. An intrachain disulfide couples Cys222 to Cys238.

Belongs to the Rieske iron-sulfur protein family. As to quaternary structure, component of the ubiquinol-cytochrome c oxidoreductase (cytochrome b-c1 complex, complex III, CIII), a multisubunit enzyme composed of 11 subunits. The complex is composed of 3 respiratory subunits cytochrome b, cytochrome c1 and Rieske protein UQCRFS1, 2 core protein subunits UQCRC1/QCR1 and UQCRC2/QCR2, and 6 low-molecular weight protein subunits UQCRH/QCR6, UQCRB/QCR7, UQCRQ/QCR8, UQCR10/QCR9, UQCR11/QCR10 and subunit 9, the cleavage product of Rieske protein UQCRFS1. The complex exists as an obligatory dimer and forms supercomplexes (SCs) in the inner mitochondrial membrane with NADH-ubiquinone oxidoreductase (complex I, CI) and cytochrome c oxidase (complex IV, CIV), resulting in different assemblies (supercomplex SCI(1)III(2)IV(1) and megacomplex MCI(2)III(2)IV(2)). Incorporation of the Rieske protein UQCRFS1 is the penultimate step in complex III assembly. Interacts with TTC19, which is involved in the clearance of UQCRFS1 fragments. Component of the ubiquinol-cytochrome c oxidoreductase (cytochrome b-c1 complex, complex III, CIII). Subunit 9 corresponds to the mitochondrial targeting sequence (MTS) of Rieske protein UQCRFS1. It is retained after processing and incorporated inside complex III, where it remains bound to the complex and localizes between the 2 core subunits UQCRC1/QCR1 and UQCRC2/QCR2. It depends on [2Fe-2S] cluster as a cofactor. Proteolytic processing is necessary for the correct insertion of UQCRFS1 in the complex III dimer. Several fragments are generated during UQCRFS1 insertion, most probably due to the endogenous matrix-processing peptidase (MPP) activity of the 2 core protein subunits UQCRC1/QCR1 and UQCRC2/QCR2, which are homologous to the 2 mitochondrial-processing peptidase (MPP) subunits beta-MPP and alpha-MPP respectively. The action of the protease is also necessary for the clearance of the UQCRFS1 fragments.

The protein resides in the mitochondrion inner membrane. The catalysed reaction is a quinol + 2 Fe(III)-[cytochrome c](out) = a quinone + 2 Fe(II)-[cytochrome c](out) + 2 H(+)(out). In terms of biological role, component of the ubiquinol-cytochrome c oxidoreductase, a multisubunit transmembrane complex that is part of the mitochondrial electron transport chain which drives oxidative phosphorylation. The respiratory chain contains 3 multisubunit complexes succinate dehydrogenase (complex II, CII), ubiquinol-cytochrome c oxidoreductase (cytochrome b-c1 complex, complex III, CIII) and cytochrome c oxidase (complex IV, CIV), that cooperate to transfer electrons derived from NADH and succinate to molecular oxygen, creating an electrochemical gradient over the inner membrane that drives transmembrane transport and the ATP synthase. The cytochrome b-c1 complex catalyzes electron transfer from ubiquinol to cytochrome c, linking this redox reaction to translocation of protons across the mitochondrial inner membrane, with protons being carried across the membrane as hydrogens on the quinol. In the process called Q cycle, 2 protons are consumed from the matrix, 4 protons are released into the intermembrane space and 2 electrons are passed to cytochrome c. The Rieske protein is a catalytic core subunit containing a [2Fe-2S] iron-sulfur cluster. It cycles between 2 conformational states during catalysis to transfer electrons from the quinol bound in the Q(0) site in cytochrome b to cytochrome c1. Incorporation of UQCRFS1 is the penultimate step in complex III assembly. Its function is as follows. Component of the ubiquinol-cytochrome c oxidoreductase (cytochrome b-c1 complex, complex III, CIII). UQCRFS1 undergoes proteolytic processing once it is incorporated in the complex III dimer. One of the fragments, called subunit 9, corresponds to its mitochondrial targeting sequence (MTS). The proteolytic processing is necessary for the correct insertion of UQCRFS1 in the complex III dimer, but the persistence of UQCRFS1-derived fragments may prevent newly imported UQCRFS1 to be processed and assembled into complex III and is detrimental for the complex III structure and function. The polypeptide is Cytochrome b-c1 complex subunit Rieske, mitochondrial (Uqcrfs1) (Rattus norvegicus (Rat)).